A 227-amino-acid polypeptide reads, in one-letter code: ATP-dependent dethiobiotin synthetase BioD (227 aa).

13 to 18 (DVGKTV) contacts ATP. Thr17 is a Mg(2+) binding site. Lys38 is a catalytic residue. ATP-binding positions include Asp55, 116 to 119 (EGAG), 176 to 177 (NR), and 205 to 207 (PYI). Residues Asp55 and Glu116 each contribute to the Mg(2+) site.

It belongs to the dethiobiotin synthetase family. As to quaternary structure, homodimer. Mg(2+) serves as cofactor.

It localises to the cytoplasm. The catalysed reaction is (7R,8S)-7,8-diammoniononanoate + CO2 + ATP = (4R,5S)-dethiobiotin + ADP + phosphate + 3 H(+). It participates in cofactor biosynthesis; biotin biosynthesis; biotin from 7,8-diaminononanoate: step 1/2. Functionally, catalyzes a mechanistically unusual reaction, the ATP-dependent insertion of CO2 between the N7 and N8 nitrogen atoms of 7,8-diaminopelargonic acid (DAPA, also called 7,8-diammoniononanoate) to form a ureido ring. This chain is ATP-dependent dethiobiotin synthetase BioD, found in Vibrio vulnificus (strain CMCP6).